Reading from the N-terminus, the 482-residue chain is Succinate-semialdehyde dehydrogenase [NADP(+)] GabD (482 aa).

Residues 156–157 (WN), 180–183 (KPAS), and 233–234 (GS) contribute to the NADP(+) site. Glu-255 acts as the Proton acceptor in catalysis. Leu-256 serves as a coordination point for NADP(+). Cys-289 serves as the catalytic Nucleophile. NADP(+) is bound at residue Glu-386.

Belongs to the aldehyde dehydrogenase family. As to quaternary structure, homotetramer.

It catalyses the reaction succinate semialdehyde + NADP(+) + H2O = succinate + NADPH + 2 H(+). It carries out the reaction 5-oxopentanoate + NADP(+) + H2O = glutarate + NADPH + 2 H(+). It participates in amino-acid degradation; 4-aminobutanoate degradation. It functions in the pathway amino-acid degradation. Functionally, catalyzes the NADP(+)-dependent oxidation of succinate semialdehyde to succinate. Thereby functions in a GABA degradation pathway that allows some E.coli strains to utilize GABA as a nitrogen source for growth. Also catalyzes the conversion of glutarate semialdehyde to glutarate, as part of a L-lysine degradation pathway that proceeds via cadaverine, glutarate and L-2-hydroxyglutarate. The sequence is that of Succinate-semialdehyde dehydrogenase [NADP(+)] GabD (gabD) from Escherichia coli (strain K12).